An 880-amino-acid chain; its full sequence is MTERKKLVLVDGNSLAYRAFFALPLLSNDKGVHTNAVYGFAMILMKMLEDEKPTHMLVAFDAGKTTFRHGTFKEYKGGRQKTPPELSEQMPFIRELLDAYQISRYELEQYEADDIIGTLAKSAEKDGFEVKVFSGDKDLTQLATDKTTVAITRKGITDVEFYTPEHVKEKYGLTPEQIIDMKGLMGDSSDNIPGVPGVGEKTAIKLLKQFDSVEKLLESIDEVSGKKLKEKLEEFKDQALMSKELATIMTDAPIEVSVSGLEYQGFNREQVIAIFKDLGFNTLLERLGEDSAEAEQDQSLEDINVKTVTDVTSDILVSPSAFVVEQIGDNYHEEPILGFSIVNETGAYFIPKDIAVESEVFKEWVENDEQKKWVFDSKRAVVALRWQGIELKGAEFDTLLAAYIINPGNSYDDVASVAKDYGLHIVSSDESVYGKGAKRAVPSEDVLSEHLGRKALAIQSLREKLVQELENNDQLELFEELEMPLALILGEMESTGVKVDVDRLKRMGEELGAKLKEYEEKIHEIAGEPFNINSPKQLGVILFEKIGLPVVKKTKTGYSTSADVLEKLADKHDIVDYILQYRQIGKLQSTYIEGLLKVTRPDSHKVHTRFNQALTQTGRLSSTDPNLQNIPIRLEEGRKIRQAFVPSEKDWLIFAADYSQIELRVLAHISKDENLIEAFTNDMDIHTKTAMDVFHVAKDEVTSAMRRQAKAVNFGIVYGISDYGLSQNLGITRKEAGAFIDRYLESFQGVKAYMEDSVQEAKQKGYVTTLMHRRRYIPELTSRNFNIRSFAERTAMNTPIQGSAADIIKKAMIDMAAKLKEKQLKARLLLQVHDELIFEAPKEEIEILEKLVPEVMEHALALDVPLKVDFASGPSWYDAK.

The 5'-3' exonuclease domain occupies 174-268 (TPEQIIDMKG…SGLEYQGFNR (95 aa)). One can recognise a 3'-5' exonuclease domain in the interval 302-470 (DINVKTVTDV…LREKLVQELE (169 aa)).

Belongs to the DNA polymerase type-A family. As to quaternary structure, single-chain monomer with multiple functions.

The enzyme catalyses DNA(n) + a 2'-deoxyribonucleoside 5'-triphosphate = DNA(n+1) + diphosphate. Its function is as follows. In addition to polymerase activity, this DNA polymerase exhibits 3'-5' and 5'-3' exonuclease activity. The chain is DNA polymerase I (polA) from Bacillus subtilis (strain 168).